The sequence spans 240 residues: uncharacterized protein (240 aa).

The first 18 residues, 1-18 (MTRYTYLFILQIISCSFA), serve as a signal peptide directing secretion. A glycan (N-linked (GlcNAc...) asparagine) is linked at Asn-127. The helical transmembrane segment at 215 to 235 (GFISSSQLPQFVYLIVFTIIG) threads the bilayer.

The protein resides in the membrane. This is an uncharacterized protein from Caenorhabditis elegans.